The following is a 191-amino-acid chain: Hypoxanthine/guanine phosphoribosyltransferase (191 aa).

Belongs to the purine/pyrimidine phosphoribosyltransferase family. Archaeal HPRT subfamily. Homodimer.

Its subcellular location is the cytoplasm. The catalysed reaction is IMP + diphosphate = hypoxanthine + 5-phospho-alpha-D-ribose 1-diphosphate. It carries out the reaction GMP + diphosphate = guanine + 5-phospho-alpha-D-ribose 1-diphosphate. It participates in purine metabolism; IMP biosynthesis via salvage pathway; IMP from hypoxanthine: step 1/1. In terms of biological role, catalyzes a salvage reaction resulting in the formation of IMP that is energically less costly than de novo synthesis. In Methanocella arvoryzae (strain DSM 22066 / NBRC 105507 / MRE50), this protein is Hypoxanthine/guanine phosphoribosyltransferase.